A 76-amino-acid chain; its full sequence is uncharacterized protein (76 aa).

The N-terminal stretch at 1-15 (MYLPLLLFCVISCYG) is a signal peptide.

This is an uncharacterized protein from Magallana gigas (Pacific oyster).